A 210-amino-acid polypeptide reads, in one-letter code: Large ribosomal subunit protein bL25 (210 aa).

A disordered region spans residues 190–210; the sequence is LKSEGAEGGEAEAGQAEEGEE. The segment covering 196–210 has biased composition (acidic residues); it reads EGGEAEAGQAEEGEE.

Belongs to the bacterial ribosomal protein bL25 family. CTC subfamily. In terms of assembly, part of the 50S ribosomal subunit; part of the 5S rRNA/L5/L18/L25 subcomplex. Contacts the 5S rRNA. Binds to the 5S rRNA independently of L5 and L18.

In terms of biological role, this is one of the proteins that binds to the 5S RNA in the ribosome where it forms part of the central protuberance. In Chelativorans sp. (strain BNC1), this protein is Large ribosomal subunit protein bL25.